Reading from the N-terminus, the 75-residue chain is DNA-directed RNA polymerase subunit Rpo6 (75 aa).

It belongs to the archaeal Rpo6/eukaryotic RPB6 RNA polymerase subunit family. Part of the RNA polymerase complex.

Its subcellular location is the cytoplasm. The enzyme catalyses RNA(n) + a ribonucleoside 5'-triphosphate = RNA(n+1) + diphosphate. DNA-dependent RNA polymerase (RNAP) catalyzes the transcription of DNA into RNA using the four ribonucleoside triphosphates as substrates. The protein is DNA-directed RNA polymerase subunit Rpo6 of Archaeoglobus fulgidus (strain ATCC 49558 / DSM 4304 / JCM 9628 / NBRC 100126 / VC-16).